A 273-amino-acid polypeptide reads, in one-letter code: 2,3,4,5-tetrahydropyridine-2,6-dicarboxylate N-succinyltransferase (273 aa).

2 residues coordinate substrate: Arg104 and Asp141.

Belongs to the transferase hexapeptide repeat family. In terms of assembly, homotrimer.

It is found in the cytoplasm. The enzyme catalyses (S)-2,3,4,5-tetrahydrodipicolinate + succinyl-CoA + H2O = (S)-2-succinylamino-6-oxoheptanedioate + CoA. Its pathway is amino-acid biosynthesis; L-lysine biosynthesis via DAP pathway; LL-2,6-diaminopimelate from (S)-tetrahydrodipicolinate (succinylase route): step 1/3. In Laribacter hongkongensis (strain HLHK9), this protein is 2,3,4,5-tetrahydropyridine-2,6-dicarboxylate N-succinyltransferase.